We begin with the raw amino-acid sequence, 404 residues long: Probable tRNA sulfurtransferase (404 aa).

The region spanning 60 to 165 is the THUMP domain; that stretch reads RSVIEALKPV…DEAAYLSHED (106 aa). Residues 183-184, 208-209, Arg-265, Gly-287, and Gln-296 each bind ATP; these read ML and HF.

It belongs to the ThiI family.

Its subcellular location is the cytoplasm. It carries out the reaction [ThiI sulfur-carrier protein]-S-sulfanyl-L-cysteine + a uridine in tRNA + 2 reduced [2Fe-2S]-[ferredoxin] + ATP + H(+) = [ThiI sulfur-carrier protein]-L-cysteine + a 4-thiouridine in tRNA + 2 oxidized [2Fe-2S]-[ferredoxin] + AMP + diphosphate. It catalyses the reaction [ThiS sulfur-carrier protein]-C-terminal Gly-Gly-AMP + S-sulfanyl-L-cysteinyl-[cysteine desulfurase] + AH2 = [ThiS sulfur-carrier protein]-C-terminal-Gly-aminoethanethioate + L-cysteinyl-[cysteine desulfurase] + A + AMP + 2 H(+). Its pathway is cofactor biosynthesis; thiamine diphosphate biosynthesis. Catalyzes the ATP-dependent transfer of a sulfur to tRNA to produce 4-thiouridine in position 8 of tRNAs, which functions as a near-UV photosensor. Also catalyzes the transfer of sulfur to the sulfur carrier protein ThiS, forming ThiS-thiocarboxylate. This is a step in the synthesis of thiazole, in the thiamine biosynthesis pathway. The sulfur is donated as persulfide by IscS. The sequence is that of Probable tRNA sulfurtransferase from Streptococcus equi subsp. zooepidemicus (strain H70).